The following is a 134-amino-acid chain: Small ribosomal subunit protein uS9 (134 aa).

Residues D109 to R134 form a disordered region. Residues P118–R134 show a composition bias toward basic residues.

This sequence belongs to the universal ribosomal protein uS9 family.

The protein is Small ribosomal subunit protein uS9 of Methanococcus aeolicus (strain ATCC BAA-1280 / DSM 17508 / OCM 812 / Nankai-3).